The sequence spans 256 residues: Imidazole glycerol phosphate synthase subunit HisF (256 aa).

Catalysis depends on residues Asp-12 and Asp-131.

This sequence belongs to the HisA/HisF family. As to quaternary structure, heterodimer of HisH and HisF.

It localises to the cytoplasm. It catalyses the reaction 5-[(5-phospho-1-deoxy-D-ribulos-1-ylimino)methylamino]-1-(5-phospho-beta-D-ribosyl)imidazole-4-carboxamide + L-glutamine = D-erythro-1-(imidazol-4-yl)glycerol 3-phosphate + 5-amino-1-(5-phospho-beta-D-ribosyl)imidazole-4-carboxamide + L-glutamate + H(+). The protein operates within amino-acid biosynthesis; L-histidine biosynthesis; L-histidine from 5-phospho-alpha-D-ribose 1-diphosphate: step 5/9. In terms of biological role, IGPS catalyzes the conversion of PRFAR and glutamine to IGP, AICAR and glutamate. The HisF subunit catalyzes the cyclization activity that produces IGP and AICAR from PRFAR using the ammonia provided by the HisH subunit. The sequence is that of Imidazole glycerol phosphate synthase subunit HisF from Pseudomonas syringae pv. tomato (strain ATCC BAA-871 / DC3000).